Here is a 129-residue protein sequence, read N- to C-terminus: Flagellar assembly factor FliW 2 (129 aa).

The protein belongs to the FliW family. Interacts with translational regulator CsrA and flagellin(s).

Its subcellular location is the cytoplasm. Acts as an anti-CsrA protein, binds CsrA and prevents it from repressing translation of its target genes, one of which is flagellin. Binds to flagellin and participates in the assembly of the flagellum. The protein is Flagellar assembly factor FliW 2 of Helicobacter pylori (strain J99 / ATCC 700824) (Campylobacter pylori J99).